We begin with the raw amino-acid sequence, 408 residues long: LL-diaminopimelate aminotransferase (408 aa).

Positions 15 and 42 each coordinate substrate. Residues Tyr-72, 108-109 (SK), Tyr-132, Asn-187, Tyr-218, and 246-248 (SFS) contribute to the pyridoxal 5'-phosphate site. 3 residues coordinate substrate: Lys-109, Tyr-132, and Asn-187. Lys-249 bears the N6-(pyridoxal phosphate)lysine mark. 2 residues coordinate pyridoxal 5'-phosphate: Arg-257 and Asn-292. Substrate is bound by residues Asn-292 and Arg-388.

Belongs to the class-I pyridoxal-phosphate-dependent aminotransferase family. LL-diaminopimelate aminotransferase subfamily. In terms of assembly, homodimer. Requires pyridoxal 5'-phosphate as cofactor.

It catalyses the reaction (2S,6S)-2,6-diaminopimelate + 2-oxoglutarate = (S)-2,3,4,5-tetrahydrodipicolinate + L-glutamate + H2O + H(+). Its pathway is amino-acid biosynthesis; L-lysine biosynthesis via DAP pathway; LL-2,6-diaminopimelate from (S)-tetrahydrodipicolinate (aminotransferase route): step 1/1. Involved in the synthesis of meso-diaminopimelate (m-DAP or DL-DAP), required for both lysine and peptidoglycan biosynthesis. Catalyzes the direct conversion of tetrahydrodipicolinate to LL-diaminopimelate. This is LL-diaminopimelate aminotransferase from Prochlorococcus marinus (strain MIT 9313).